The primary structure comprises 384 residues: Troponin T (384 aa).

Residues 1-15 (MSDEEEYSEEEEEVP) show a composition bias toward acidic residues. Disordered regions lie at residues 1-23 (MSDEEEYSEEEEEVPVDTKPRHS), 61-169 (RAKE…KEQL), 237-257 (LRHKALKKGLDPEALTGKYPP), and 313-384 (PKWF…EEEE). 2 stretches are compositionally biased toward basic and acidic residues: residues 61–74 (RAKEEEDLKKLKDK) and 81–126 (MRAD…EKKR). Residues 316 to 327 (FGERPGKKKGDP) are compositionally biased toward basic and acidic residues. The segment covering 328 to 384 (ESPEEEEVKADAGVDDELEEPTFEPEPEPEPEEEAAEEEAEEEEEEEEEEEEEEEEE) has biased composition (acidic residues).

Belongs to the troponin T family.

Functionally, troponin T is the tropomyosin-binding subunit of troponin, the thin filament regulatory complex which confers calcium-sensitivity to striated muscle actomyosin ATPase activity. The polypeptide is Troponin T (TNT) (Periplaneta americana (American cockroach)).